A 106-amino-acid polypeptide reads, in one-letter code: Cytochrome c3 (106 aa).

Heme c-binding residues include His-26, His-29, Cys-34, Cys-37, His-38, His-39, Cys-50, Cys-55, His-56, His-75, Cys-82, Cys-85, His-86, Cys-98, Cys-101, and His-102.

In terms of processing, binds 4 heme c groups per subunit.

In terms of biological role, participates in sulfate respiration coupled with phosphorylation by transferring electrons from the enzyme dehydrogenase to ferredoxin. The protein is Cytochrome c3 of Maridesulfovibrio salexigens (Desulfovibrio salexigens).